Consider the following 393-residue polypeptide: tRNA (guanine-N(7)-)-methyltransferase (393 aa).

Glu-124, Glu-149, and Asp-176 together coordinate S-adenosyl-L-methionine. A substrate-binding site is contributed by Asp-232.

The protein belongs to the class I-like SAM-binding methyltransferase superfamily. TrmB family.

The catalysed reaction is guanosine(46) in tRNA + S-adenosyl-L-methionine = N(7)-methylguanosine(46) in tRNA + S-adenosyl-L-homocysteine. It participates in tRNA modification; N(7)-methylguanine-tRNA biosynthesis. Its function is as follows. Catalyzes the formation of N(7)-methylguanine at position 46 (m7G46) in tRNA. The polypeptide is tRNA (guanine-N(7)-)-methyltransferase (Helicobacter pylori (strain ATCC 700392 / 26695) (Campylobacter pylori)).